A 687-amino-acid polypeptide reads, in one-letter code: Light-independent protochlorophyllide reductase subunit B (687 aa).

Position 36 (aspartate 36) interacts with [4Fe-4S] cluster. Aspartate 441 functions as the Proton donor in the catalytic mechanism. A substrate-binding site is contributed by 576–577 (GM).

This sequence belongs to the ChlB/BchB/BchZ family. In terms of assembly, protochlorophyllide reductase is composed of three subunits; ChlL, ChlN and ChlB. Forms a heterotetramer of two ChlB and two ChlN subunits. The cofactor is [4Fe-4S] cluster.

It localises to the plastid. It is found in the chloroplast. It carries out the reaction chlorophyllide a + oxidized 2[4Fe-4S]-[ferredoxin] + 2 ADP + 2 phosphate = protochlorophyllide a + reduced 2[4Fe-4S]-[ferredoxin] + 2 ATP + 2 H2O. The protein operates within porphyrin-containing compound metabolism; chlorophyll biosynthesis (light-independent). Functionally, component of the dark-operative protochlorophyllide reductase (DPOR) that uses Mg-ATP and reduced ferredoxin to reduce ring D of protochlorophyllide (Pchlide) to form chlorophyllide a (Chlide). This reaction is light-independent. The NB-protein (ChlN-ChlB) is the catalytic component of the complex. The sequence is that of Light-independent protochlorophyllide reductase subunit B from Chlamydomonas reinhardtii (Chlamydomonas smithii).